The following is a 460-amino-acid chain: Cysteine--tRNA ligase (460 aa).

Cys-29 provides a ligand contact to Zn(2+). Residues 31–41 carry the 'HIGH' region motif; it reads PTVYDFAHIGN. Cys-227, His-252, and Glu-256 together coordinate Zn(2+). Residues 285–289 carry the 'KMSKS' region motif; it reads KMSKS. Lys-288 provides a ligand contact to ATP.

This sequence belongs to the class-I aminoacyl-tRNA synthetase family. In terms of assembly, monomer. Zn(2+) is required as a cofactor.

It localises to the cytoplasm. It carries out the reaction tRNA(Cys) + L-cysteine + ATP = L-cysteinyl-tRNA(Cys) + AMP + diphosphate. This is Cysteine--tRNA ligase from Bradyrhizobium diazoefficiens (strain JCM 10833 / BCRC 13528 / IAM 13628 / NBRC 14792 / USDA 110).